The chain runs to 1022 residues: Leucine--tRNA ligase (1022 aa).

A 'HIGH' region motif is present at residues 47–57; it reads PYPNSPMHLGH. Residues 697–701 carry the 'KMSKS' region motif; it reads KMSKS. K700 is a binding site for ATP.

Belongs to the class-I aminoacyl-tRNA synthetase family.

The protein localises to the cytoplasm. It catalyses the reaction tRNA(Leu) + L-leucine + ATP = L-leucyl-tRNA(Leu) + AMP + diphosphate. The sequence is that of Leucine--tRNA ligase from Ignicoccus hospitalis (strain KIN4/I / DSM 18386 / JCM 14125).